Here is a 295-residue protein sequence, read N- to C-terminus: MSLFKGSGVALITPFKDEESVDFETLGRLVDFHLEHKTDAIIVCGTTGEPSTMPDDEHLEVIRFVIDRVAGRKPVIAGVGSNHTKHAVYLSKKAQELGADGLLHVTPYYNKTTQKGLIEHFKEINDAVSIPIIVYNVPSRTGLNVLPETMKELAKLPNVKAIKEASGNITQVAEIAMLCPEIDIYSGNDDQIVPILSVGGIGVISVLANILPDETHDIVEYFLNGEIEKARELQLKLLPIIKALFIEVNPIPVKEAMNMMGFNVGKPRLPLTTMTEKNREILKKALVDYGISVKE.

Thr-47 is a binding site for pyruvate. Tyr-135 acts as the Proton donor/acceptor in catalysis. Lys-163 serves as the catalytic Schiff-base intermediate with substrate. Ile-204 lines the pyruvate pocket.

This sequence belongs to the DapA family. In terms of assembly, homotetramer; dimer of dimers.

The protein localises to the cytoplasm. The catalysed reaction is L-aspartate 4-semialdehyde + pyruvate = (2S,4S)-4-hydroxy-2,3,4,5-tetrahydrodipicolinate + H2O + H(+). It participates in amino-acid biosynthesis; L-lysine biosynthesis via DAP pathway; (S)-tetrahydrodipicolinate from L-aspartate: step 3/4. In terms of biological role, catalyzes the condensation of (S)-aspartate-beta-semialdehyde [(S)-ASA] and pyruvate to 4-hydroxy-tetrahydrodipicolinate (HTPA). The protein is 4-hydroxy-tetrahydrodipicolinate synthase of Caldicellulosiruptor bescii (strain ATCC BAA-1888 / DSM 6725 / KCTC 15123 / Z-1320) (Anaerocellum thermophilum).